The chain runs to 300 residues: Ribosomal RNA small subunit methyltransferase H (300 aa).

S-adenosyl-L-methionine is bound by residues 46 to 48 (GGH), Asp-65, Phe-92, Asp-107, and Gln-114.

Belongs to the methyltransferase superfamily. RsmH family.

The protein resides in the cytoplasm. It carries out the reaction cytidine(1402) in 16S rRNA + S-adenosyl-L-methionine = N(4)-methylcytidine(1402) in 16S rRNA + S-adenosyl-L-homocysteine + H(+). Functionally, specifically methylates the N4 position of cytidine in position 1402 (C1402) of 16S rRNA. The chain is Ribosomal RNA small subunit methyltransferase H from Prochlorococcus marinus (strain AS9601).